A 315-amino-acid chain; its full sequence is 4-hydroxy-3-methylbut-2-enyl diphosphate reductase (315 aa).

Position 12 (Cys-12) interacts with [4Fe-4S] cluster. His-41 and His-74 together coordinate (2E)-4-hydroxy-3-methylbut-2-enyl diphosphate. Dimethylallyl diphosphate contacts are provided by His-41 and His-74. 2 residues coordinate isopentenyl diphosphate: His-41 and His-74. Cys-96 is a [4Fe-4S] cluster binding site. His-124 lines the (2E)-4-hydroxy-3-methylbut-2-enyl diphosphate pocket. His-124 serves as a coordination point for dimethylallyl diphosphate. His-124 is an isopentenyl diphosphate binding site. Catalysis depends on Glu-126, which acts as the Proton donor. Thr-168 serves as a coordination point for (2E)-4-hydroxy-3-methylbut-2-enyl diphosphate. Cys-198 is a binding site for [4Fe-4S] cluster. Positions 226, 227, 228, and 270 each coordinate (2E)-4-hydroxy-3-methylbut-2-enyl diphosphate. 4 residues coordinate dimethylallyl diphosphate: Ser-226, Ser-227, Asn-228, and Ser-270. Ser-226, Ser-227, Asn-228, and Ser-270 together coordinate isopentenyl diphosphate.

Belongs to the IspH family. The cofactor is [4Fe-4S] cluster.

The enzyme catalyses isopentenyl diphosphate + 2 oxidized [2Fe-2S]-[ferredoxin] + H2O = (2E)-4-hydroxy-3-methylbut-2-enyl diphosphate + 2 reduced [2Fe-2S]-[ferredoxin] + 2 H(+). It carries out the reaction dimethylallyl diphosphate + 2 oxidized [2Fe-2S]-[ferredoxin] + H2O = (2E)-4-hydroxy-3-methylbut-2-enyl diphosphate + 2 reduced [2Fe-2S]-[ferredoxin] + 2 H(+). Its pathway is isoprenoid biosynthesis; dimethylallyl diphosphate biosynthesis; dimethylallyl diphosphate from (2E)-4-hydroxy-3-methylbutenyl diphosphate: step 1/1. It participates in isoprenoid biosynthesis; isopentenyl diphosphate biosynthesis via DXP pathway; isopentenyl diphosphate from 1-deoxy-D-xylulose 5-phosphate: step 6/6. Functionally, catalyzes the conversion of 1-hydroxy-2-methyl-2-(E)-butenyl 4-diphosphate (HMBPP) into a mixture of isopentenyl diphosphate (IPP) and dimethylallyl diphosphate (DMAPP). Acts in the terminal step of the DOXP/MEP pathway for isoprenoid precursor biosynthesis. This is 4-hydroxy-3-methylbut-2-enyl diphosphate reductase from Pseudomonas syringae pv. syringae (strain B728a).